Here is a 38-residue protein sequence, read N- to C-terminus: Photosystem II reaction center protein L (38 aa).

Residues S17–F37 traverse the membrane as a helical segment.

This sequence belongs to the PsbL family. In terms of assembly, PSII is composed of 1 copy each of membrane proteins PsbA, PsbB, PsbC, PsbD, PsbE, PsbF, PsbH, PsbI, PsbJ, PsbK, PsbL, PsbM, PsbT, PsbX, PsbY, PsbZ, Psb30/Ycf12, at least 3 peripheral proteins of the oxygen-evolving complex and a large number of cofactors. It forms dimeric complexes.

The protein resides in the plastid. It localises to the chloroplast thylakoid membrane. Functionally, one of the components of the core complex of photosystem II (PSII). PSII is a light-driven water:plastoquinone oxidoreductase that uses light energy to abstract electrons from H(2)O, generating O(2) and a proton gradient subsequently used for ATP formation. It consists of a core antenna complex that captures photons, and an electron transfer chain that converts photonic excitation into a charge separation. This subunit is found at the monomer-monomer interface and is required for correct PSII assembly and/or dimerization. The polypeptide is Photosystem II reaction center protein L (Chlamydomonas moewusii (Chlamydomonas eugametos)).